We begin with the raw amino-acid sequence, 809 residues long: F-BAR domain only protein 2 (809 aa).

One can recognise an F-BAR domain in the interval 3-250 (MAHFVENFWG…NMANTTIESL (248 aa)). A mediates dimerization and binding to membranes enriched in Pi(4,5)-P2 and induces their tubulation region spans residues 3-274 (MAHFVENFWG…PGLIEFEECD (272 aa)). A coiled-coil region spans residues 87–156 (HLDLVRKLQE…CVEQERLKKE (70 aa)). Residue K297 forms a Glycyl lysine isopeptide (Lys-Gly) (interchain with G-Cter in SUMO2) linkage. The disordered stretch occupies residues 301–352 (DAESVECPDADSLNIPDVDEEGFSIKPEANQNDTKENHFYSSSDSDSEDEEP). Position 312 is a phosphoserine (S312). T385 carries the phosphothreonine modification. 4 positions are modified to phosphoserine: S387, S394, S402, and S403. Residues 390 to 416 (VSRHSPVQMNRNSSNEELTKSKPSSLP) show a composition bias toward polar residues. 2 disordered regions span residues 390–422 (VSRHSPVQMNRNSSNEELTKSKPSSLPTEKGTN) and 435–536 (LESS…PVSL). Positions 435–456 (LESSSAPLTSSSSARPTTPLSL) are enriched in low complexity. Phosphoserine is present on residues S487, S492, S495, S507, S509, S510, and S532. The segment covering 501-520 (PLARAESSSSISSSASLSAA) has biased composition (low complexity). The mediates interaction with DAB2, EPS15, EPS15R and ITSN1 stretch occupies residues 520-809 (ANTPTVGVSR…FATGRYLADC (290 aa)). In terms of domain architecture, MHD spans 541 to 808 (TLPVAIALTE…RFATGRYLAD (268 aa)).

Belongs to the FCHO family. Homodimer; disulfide-linked. May form homotetramer. Interacts with AP2A1. Interacts with EPS15, EPS15R, ITSN1 and ITSN2; recruit those scaffolding proteins which in turn may interact with the adaptor protein complex AP-2 at the plasma membrane. Interacts with DAB2 (via DPF motifs); mediates LDL receptor/LDLR endocytosis. In terms of processing, ubiquitinated. Mainly undergoes monoubiquitination but also polyubiquitination. Ubiquitously expressed (at protein level).

The protein resides in the membrane. It localises to the clathrin-coated pit. In terms of biological role, functions in an early step of clathrin-mediated endocytosis. Has both a membrane binding/bending activity and the ability to recruit proteins essential to the formation of functional clathrin-coated pits. Has a lipid-binding activity with a preference for membranes enriched in phosphatidylserine and phosphoinositides (Pi(4,5) biphosphate) like the plasma membrane. Its membrane-bending activity might be important for the subsequent action of clathrin and adaptors in the formation of clathrin-coated vesicles. Involved in adaptor protein complex AP-2-dependent endocytosis of the transferrin receptor, it also functions in the AP-2-independent endocytosis of the LDL receptor. This Mus musculus (Mouse) protein is F-BAR domain only protein 2 (Fcho2).